Here is a 212-residue protein sequence, read N- to C-terminus: ATP-dependent dethiobiotin synthetase BioD (212 aa).

10–15 (GVGKTF) serves as a coordination point for ATP. Mg(2+) is bound at residue Thr14. Lys36 is a catalytic residue. Substrate is bound at residue Ser40. ATP contacts are provided by residues Asp45, 106–109 (EGAG), and 167–168 (NC). Mg(2+) contacts are provided by Asp45 and Glu106.

It belongs to the dethiobiotin synthetase family. Homodimer. Requires Mg(2+) as cofactor.

It localises to the cytoplasm. The enzyme catalyses (7R,8S)-7,8-diammoniononanoate + CO2 + ATP = (4R,5S)-dethiobiotin + ADP + phosphate + 3 H(+). It functions in the pathway cofactor biosynthesis; biotin biosynthesis; biotin from 7,8-diaminononanoate: step 1/2. In terms of biological role, catalyzes a mechanistically unusual reaction, the ATP-dependent insertion of CO2 between the N7 and N8 nitrogen atoms of 7,8-diaminopelargonic acid (DAPA, also called 7,8-diammoniononanoate) to form a ureido ring. The sequence is that of ATP-dependent dethiobiotin synthetase BioD from Methanococcus aeolicus (strain ATCC BAA-1280 / DSM 17508 / OCM 812 / Nankai-3).